The primary structure comprises 350 residues: Methionine import ATP-binding protein MetN (350 aa).

The 240-residue stretch at 2-241 folds into the ABC transporter domain; that stretch reads IQIKNLKKEY…PQAPVTRSFV (240 aa). ATP is bound at residue 38–45; it reads GHSGAGKS.

This sequence belongs to the ABC transporter superfamily. Methionine importer (TC 3.A.1.24) family. The complex is composed of two ATP-binding proteins (MetN), two transmembrane proteins (MetI) and a solute-binding protein (MetQ).

The protein resides in the cell inner membrane. The enzyme catalyses L-methionine(out) + ATP + H2O = L-methionine(in) + ADP + phosphate + H(+). It carries out the reaction D-methionine(out) + ATP + H2O = D-methionine(in) + ADP + phosphate + H(+). Part of the ABC transporter complex MetNIQ involved in methionine import. Responsible for energy coupling to the transport system. The chain is Methionine import ATP-binding protein MetN from Francisella tularensis subsp. holarctica (strain LVS).